A 486-amino-acid chain; its full sequence is Bifunctional protein HldE (486 aa).

A ribokinase region spans residues 1 to 329 (MSSRLSGLLD…AALSVAGPVG (329 aa)). 204–207 (NAFE) serves as a coordination point for ATP. Residue aspartate 274 is part of the active site. The segment at 355–486 (FTNGCFDILH…AIIARSETGK (132 aa)) is cytidylyltransferase.

The protein in the N-terminal section; belongs to the carbohydrate kinase PfkB family. This sequence in the C-terminal section; belongs to the cytidylyltransferase family. In terms of assembly, homodimer.

The enzyme catalyses D-glycero-beta-D-manno-heptose 7-phosphate + ATP = D-glycero-beta-D-manno-heptose 1,7-bisphosphate + ADP + H(+). The catalysed reaction is D-glycero-beta-D-manno-heptose 1-phosphate + ATP + H(+) = ADP-D-glycero-beta-D-manno-heptose + diphosphate. It functions in the pathway nucleotide-sugar biosynthesis; ADP-L-glycero-beta-D-manno-heptose biosynthesis; ADP-L-glycero-beta-D-manno-heptose from D-glycero-beta-D-manno-heptose 7-phosphate: step 1/4. The protein operates within nucleotide-sugar biosynthesis; ADP-L-glycero-beta-D-manno-heptose biosynthesis; ADP-L-glycero-beta-D-manno-heptose from D-glycero-beta-D-manno-heptose 7-phosphate: step 3/4. Functionally, catalyzes the phosphorylation of D-glycero-D-manno-heptose 7-phosphate at the C-1 position to selectively form D-glycero-beta-D-manno-heptose-1,7-bisphosphate. In terms of biological role, catalyzes the ADP transfer from ATP to D-glycero-beta-D-manno-heptose 1-phosphate, yielding ADP-D-glycero-beta-D-manno-heptose. This Hyphomonas neptunium (strain ATCC 15444) protein is Bifunctional protein HldE.